The following is a 199-amino-acid chain: Putative AgrB-like protein (199 aa).

5 helical membrane passes run 43–63, 81–101, 108–128, 139–159, and 165–185; these read IIIFLVFLFIKEIPLFLFSFI, YGCLTCSILYFMIILLFTRLF, FYIVFFILSLAITFIFAPCPN, LKILSLISLTFWIILFYLSPL, and ILISIFLQIIQVIIINTKGVI.

It belongs to the AgrB family.

Its subcellular location is the cell membrane. In terms of biological role, may be involved in the proteolytic processing of a quorum sensing system signal molecule precursor. In Clostridium beijerinckii (Clostridium MP), this protein is Putative AgrB-like protein (cfg02).